The sequence spans 711 residues: Long-chain-fatty-acid--CoA ligase 4 (711 aa).

The helical; Signal-anchor for type III membrane protein transmembrane segment at 8–28 threads the bilayer; sequence LTIILLPVHLLITIYSALIFI. Residues 29–711 lie on the Cytoplasmic side of the membrane; the sequence is PWYFLTNAKK…KDIERMYGGK (683 aa). Serine 447 carries the phosphoserine modification.

The protein belongs to the ATP-dependent AMP-binding enzyme family. Requires Mg(2+) as cofactor. As to expression, abundant in steroidogenic tissues, also found in the kidney, brain and liver.

It is found in the mitochondrion outer membrane. The protein localises to the peroxisome membrane. It localises to the microsome membrane. Its subcellular location is the endoplasmic reticulum membrane. The protein resides in the cell membrane. The enzyme catalyses a long-chain fatty acid + ATP + CoA = a long-chain fatty acyl-CoA + AMP + diphosphate. The catalysed reaction is (5Z,8Z,11Z,14Z)-eicosatetraenoate + ATP + CoA = (5Z,8Z,11Z,14Z)-eicosatetraenoyl-CoA + AMP + diphosphate. It catalyses the reaction 15-hydroxy-(5Z,8Z,11Z,13E)-eicosatetraenoate + ATP + CoA = 15-hydroxy-(5Z,8Z,11Z,13E)-eicosatetraenoyl-CoA + AMP + diphosphate. It carries out the reaction 12-hydroxy-(5Z,8Z,10E,14Z)-eicosatetraenoate + ATP + CoA = 12-hydroxy-(5Z,8Z,10E,14Z)-eicosatetraenoyl-CoA + AMP + diphosphate. The enzyme catalyses 5-hydroxy-(6E,8Z,11Z,14Z)-eicosatetraenoate + ATP + CoA = 5-hydroxy-(6E,8Z,11Z,14Z)-eicosatetraenoyl-CoA + AMP + diphosphate. The catalysed reaction is 5,6-epoxy-(8Z,11Z,14Z)-eicosatrienoate + ATP + CoA = 5,6-epoxy-(8Z,11Z,14Z)-eicosatrienoyl-CoA + AMP + diphosphate. It catalyses the reaction 14,15-epoxy-(5Z,8Z,11Z)-eicosatrienoate + ATP + CoA = 14,15-epoxy-(5Z,8Z,11Z)-eicosatrienoyl-CoA + AMP + diphosphate. It carries out the reaction 11,12-epoxy-(5Z,8Z,14Z)-eicosatrienoate + ATP + CoA = 11,12-epoxy-(5Z,8Z,14Z)-eicosatrienoyl-CoA + AMP + diphosphate. The enzyme catalyses 8,9-epoxy-(5Z,11Z,14Z)-eicosatrienoate + ATP + CoA = 8,9-epoxy-(5Z,11Z,14Z)-eicosatrienoyl-CoA + AMP + diphosphate. The catalysed reaction is hexadecanoate + ATP + CoA = hexadecanoyl-CoA + AMP + diphosphate. It catalyses the reaction (E)-hexadec-2-enoate + ATP + CoA = (2E)-hexadecenoyl-CoA + AMP + diphosphate. With respect to regulation, both triacsin C and rosiglitazone inhibit arachidonoyl-CoA ligase activity. Its function is as follows. Catalyzes the conversion of long-chain fatty acids to their active form acyl-CoA for both synthesis of cellular lipids, and degradation via beta-oxidation. Preferentially activates arachidonate and eicosapentaenoate as substrates. Preferentially activates 8,9-EET &gt; 14,15-EET &gt; 5,6-EET &gt; 11,12-EET. Modulates glucose-stimulated insulin secretion by regulating the levels of unesterified EETs. Modulates prostaglandin E2 secretion. In Mus musculus (Mouse), this protein is Long-chain-fatty-acid--CoA ligase 4 (Acsl4).